Here is a 147-residue protein sequence, read N- to C-terminus: Ubiquitin-conjugating enzyme E2 D2 (147 aa).

The UBC core domain maps to 1–147; sequence MALKRIHKEL…SREWTQKYAM (147 aa). The active-site Glycyl thioester intermediate is Cys85.

Belongs to the ubiquitin-conjugating enzyme family. Interacts with SCF (SKP1-CUL1-F-box protein) E3 ubiquitin ligase complex. Interacts with CNOT4 (via RING domain). Interacts with E3 ubiquitin-protein ligases CBLC, PJA1 and PJA2. Interacts with PDZRN3. Interacts with PPP1R11. Interacts with E3 ubiquitin-protein ligase PHF7; the interaction inhibits cleavage of PHF7 and promotes association of the complex with the nucleosome core particle.

The enzyme catalyses S-ubiquitinyl-[E1 ubiquitin-activating enzyme]-L-cysteine + [E2 ubiquitin-conjugating enzyme]-L-cysteine = [E1 ubiquitin-activating enzyme]-L-cysteine + S-ubiquitinyl-[E2 ubiquitin-conjugating enzyme]-L-cysteine.. It catalyses the reaction S-ubiquitinyl-[E1 ubiquitin-activating enzyme]-L-cysteine + [acceptor protein]-L-lysine = [E1 ubiquitin-activating enzyme]-L-cysteine + N(6)-monoubiquitinyl-[acceptor protein]-L-lysine.. The protein operates within protein modification; protein ubiquitination. Accepts ubiquitin from the E1 complex and catalyzes its covalent attachment to other proteins. In vitro catalyzes 'Lys-48'-linked polyubiquitination. Mediates the selective degradation of short-lived and abnormal proteins. Functions in the E6/E6-AP-induced ubiquitination of p53/TP53. Mediates ubiquitination of PEX5 and SQSTM1 and autoubiquitination of STUB1 and TRAF6. Involved in the signal-induced conjugation and subsequent degradation of NFKBIA, FBXW2-mediated GCM1 ubiquitination and degradation, MDM2-dependent degradation of p53/TP53 and the activation of MAVS in the mitochondria by RIGI in response to viral infection. Essential for viral activation of IRF3. The chain is Ubiquitin-conjugating enzyme E2 D2 (UBE2D2) from Sus scrofa (Pig).